We begin with the raw amino-acid sequence, 531 residues long: Unconventional prefoldin RPB5 interactor (531 aa).

At Met1 the chain carries N-acetylmethionine. Disordered stretches follow at residues 1-24, 224-381, 408-470, and 500-531; these read MEPPSEPEPEPQPLAEASAAAPLR, ELES…ELPA, KSRS…SGVS, and TIPERKEVPSEVSEEPTKRVSKFRAARLQQRS. Residues 13-24 show a composition bias toward low complexity; it reads PLAEASAAAPLR. 2 stretches are compositionally biased toward polar residues: residues 257 to 266 and 280 to 296; these read SPVTDSSAAS and GQVNSLNYSVNGSNSYH. The segment covering 300-319 has biased composition (acidic residues); that stretch reads DDDEEEEDDDDDDDEDDDNE. Ser369 carries the post-translational modification Phosphoserine; by RPS6KB1. Over residues 414 to 424 the composition is skewed to polar residues; the sequence is NSVCSDTSESS. Ser439 carries the phosphoserine modification.

Belongs to the RNA polymerase II subunit 5-mediating protein family. Homodimer. Component of the PAQosome complex which is responsible for the biogenesis of several protein complexes and which consists of R2TP complex members RUVBL1, RUVBL2, RPAP3 and PIH1D1, URI complex members PFDN2, PFDN6, PDRG1, UXT and URI1 as well as ASDURF, POLR2E and DNAAF10/WDR92. Interacts with POLR2E/RPB5, RUVBL2 and RUVBL1. Interacts with PFDN2, PFDN4 and STAP1; the interactions are phosphorylation-dependent and occur in a growth-dependent manner in the mitochondrion. Interacts with UXT. Interacts with PPP1CC; the interaction is phosphorylation-dependent and occurs in a growth factor-dependent manner. Interacts (via the middle C-terminal region) with GTF2F1 and GTF2F2. Interacts with DMAP1. Interacts with TSC1 and TSC2. Interacts with PRPF8 and EFTUD2 in a ZNHIT2-dependent manner. Phosphorylation occurs in response to androgen treatment in prostate cancer cells in a mTOR-dependent manner. Phosphorylated; hyperhosphorylated in mitochondria in a mTORC-dependent signaling pathway. Phosphorylated at Ser-369 by RPS6KB1 in a growth factor- and rapamycin-dependent manner. S6K1-mediated mitochondrial phosphorylation at Ser-369 disrupts the URI1-PPP1CC complex in the mitochondrion, relieves PPP1CC phosphatase inhibition activity and hence engages a negative feedback diminishing RPS6KB1 kinase activity, preventing sustained S6K1-dependent signaling. Phosphorylated. Phosphorylation occurs essentially on serine residues. In terms of tissue distribution, expressed in the spinal cord, ganglia, choroid plexus and olfactors epithelium of the developing brain. Expressed in skin, lung, kidney, testis and muscles (at protein level). Expressed strongly in brain and kidney. Expressed weakly in skeletal muscle, lung and liver.

It is found in the nucleus. The protein resides in the cytoplasm. It localises to the mitochondrion. The protein localises to the cell projection. Its subcellular location is the dendrite. In terms of biological role, involved in gene transcription regulation. Acts as a transcriptional repressor in concert with the corepressor UXT to regulate androgen receptor (AR) transcription. May act as a tumor suppressor to repress AR-mediated gene transcription and to inhibit anchorage-independent growth in prostate cancer cells. Required for cell survival in ovarian cancer cells. Together with UXT, associates with chromatin to the NKX3-1 promoter region. Functionally, plays a central role in maintaining S6K1 signaling and BAD phosphorylation under normal growth conditions thereby protecting cells from potential deleterious effects of sustained S6K1 signaling. The URI1-PPP1CC complex acts as a central component of a negative feedback mechanism that counteracts excessive S6K1 survival signaling to BAD in response to growth factors. Mediates inhibition of PPP1CC phosphatase activity in mitochondria. Coordinates the regulation of nutrient-sensitive gene expression availability in a mTOR-dependent manner. Seems to be a scaffolding protein able to assemble a prefoldin-like complex that contains PFDs and proteins with roles in transcription and ubiquitination. In Mus musculus (Mouse), this protein is Unconventional prefoldin RPB5 interactor (Uri1).